A 652-amino-acid chain; its full sequence is Carboxypeptidase S1 homolog A (652 aa).

The first 19 residues, 1 to 19, serve as a signal peptide directing secretion; sequence MRLAASIAVALPVIGAASA. Cys-50 and Cys-121 are joined by a disulfide. 6 N-linked (GlcNAc...) asparagine glycosylation sites follow: Asn-77, Asn-132, Asn-161, Asn-168, Asn-184, and Asn-202. The active site involves Ser-238. N-linked (GlcNAc...) asparagine glycans are attached at residues Asn-260, Asn-299, Asn-347, and Asn-410. 2 disulfide bridges follow: Cys-325–Cys-361 and Cys-332–Cys-354. Asp-458 is an active-site residue. Cys-461 lines the substrate pocket. 3 N-linked (GlcNAc...) asparagine glycosylation sites follow: Asn-474, Asn-492, and Asn-505. The active site involves His-516. Glu-517 serves as a coordination point for substrate. N-linked (GlcNAc...) asparagine glycosylation occurs at Asn-594. The interval 608 to 628 is disordered; it reads AASKGNPPPTTTSSPTASPTA. The segment covering 618–628 has biased composition (low complexity); sequence TTSSPTASPTA. Gly-629 is lipidated: GPI-anchor amidated glycine. Positions 630 to 652 are cleaved as a propeptide — removed in mature form; sequence SAMLKAPVAMLAISALTVLAFYL.

Belongs to the peptidase S10 family.

It is found in the cell membrane. The enzyme catalyses Preferential release of a C-terminal arginine or lysine residue.. In terms of biological role, extracellular serine carboxypeptidase that contributes to pathogenicity. This is Carboxypeptidase S1 homolog A (SCPA) from Arthroderma benhamiae (strain ATCC MYA-4681 / CBS 112371) (Trichophyton mentagrophytes).